We begin with the raw amino-acid sequence, 637 residues long: Biosynthetic arginine decarboxylase (637 aa).

Lysine 101 is modified (N6-(pyridoxal phosphate)lysine). Position 286–296 (286–296) interacts with substrate; sequence FDVGGGLAVDY.

This sequence belongs to the Orn/Lys/Arg decarboxylase class-II family. SpeA subfamily. It depends on Mg(2+) as a cofactor. Pyridoxal 5'-phosphate serves as cofactor.

The catalysed reaction is L-arginine + H(+) = agmatine + CO2. It participates in amine and polyamine biosynthesis; agmatine biosynthesis; agmatine from L-arginine: step 1/1. Its function is as follows. Catalyzes the biosynthesis of agmatine from arginine. In Shewanella woodyi (strain ATCC 51908 / MS32), this protein is Biosynthetic arginine decarboxylase.